Consider the following 441-residue polypeptide: Chitinase-like protein Idgf3 (441 aa).

Residues 1 to 23 (MTGSLWLSLALSLAVLAQFKVSA) form the signal peptide. The GH18 domain maps to 25–441 (PNLVCFYDSQ…MLRAIKYRLL (417 aa)). An intrachain disulfide couples C29 to C56. The N-linked (GlcNAc...) asparagine glycan is linked to N221. Residues 307-331 (KDSGDSGMPVVPSTQGPAPAGPQSK) are disordered. Residues C342 and C425 are joined by a disulfide bond.

It belongs to the glycosyl hydrolase 18 family. IDGF subfamily. In terms of processing, glycosylated. In terms of tissue distribution, primarily expressed in yolk cells and fat body. In larvae, it is expressed in small and large salivary gland cells, and weakly expressed in imaginal disks. Less expressed than Idgf2 and Idgf4.

Its subcellular location is the secreted. Cooperates with insulin-like peptides to stimulate the proliferation, polarization and motility of imaginal disk cells. May act by stabilizing the binding of insulin-like peptides to its receptor through a simultaneous interaction with both molecules to form a multiprotein signaling complex. This is Chitinase-like protein Idgf3 (Idgf3) from Drosophila melanogaster (Fruit fly).